The following is a 730-amino-acid chain: MGRRKKMVERVTTLMNDPQRIRNIGIVAHIDHGKTTLSDNLLAGAGMISKELAGRQLFMDSDEEEQARGITIDASNVSMVHTFDNEDYLINLIDTPGHVDFGGDVTRAMRAVDGAVVVVDAVEGTMPQTETVLRQALREHVRPVLFVNKVDRLINELQVDSQEMQVRLGKVIDHVNKLIKNMNPEKFKAGWKVDAAAGTVAFGSALYNWAISVPMMKKTGVSFNDVYEYCKAGDMKTLAEKCPLHEAVLDMVIHFLPNPLVAQQGRVKVIWHGDENSEVGKSMTHAHADGDLAFMVTDISVDPHAGEVATGRLFSGSLTRGMEVYTSGTAKKSRVQQVGIFMGPERLEVDKIPAGNIAAVTGLKDAIVGSTVTTLDGMTPFESIRHVSEPVVTVAVEAKHTKDLPKLIEVLRQVAKEDPTLQITLDEETGEHLMAGMGELHLEVIAHRIERDKNVEITTSKPIVVYRETIKKKTEPIEGKSPNRHNRFYISVEPLDLEIVSAIKEGEITMNMPELERRQKLIELGMDKEQAKGIAGIFNSNIFIDQTKGIQYLNETMELVLDGFEEVMRAGPLTREPVANVKCVLVDAKLHEDAIHRGPAQIIPASRQAIQAGMLMAEDSLLEPYQKVFVQVPQLLMGGATKELQGRRGVILNMTTEGDLAIIEARVPVAEMFGFAGEIRSATEGRAMWSTEFGGFDVVPSSILTEIVGQIRERKGLKKDLPKASDYLSM.

The 242-residue stretch at 19–260 (QRIRNIGIVA…MVIHFLPNPL (242 aa)) folds into the tr-type G domain. Residues 28–35 (AHIDHGKT), 94–98 (DTPGH), and 148–151 (NKVD) contribute to the GTP site. Residue His596 is modified to Diphthamide.

Belongs to the TRAFAC class translation factor GTPase superfamily. Classic translation factor GTPase family. EF-G/EF-2 subfamily.

It is found in the cytoplasm. Its function is as follows. Catalyzes the GTP-dependent ribosomal translocation step during translation elongation. During this step, the ribosome changes from the pre-translocational (PRE) to the post-translocational (POST) state as the newly formed A-site-bound peptidyl-tRNA and P-site-bound deacylated tRNA move to the P and E sites, respectively. Catalyzes the coordinated movement of the two tRNA molecules, the mRNA and conformational changes in the ribosome. This Methanosarcina mazei (strain ATCC BAA-159 / DSM 3647 / Goe1 / Go1 / JCM 11833 / OCM 88) (Methanosarcina frisia) protein is Elongation factor 2.